A 221-amino-acid chain; its full sequence is 7-cyano-7-deazaguanine synthase (221 aa).

12–22 (FSGGQDSTTCL) is a binding site for ATP. Positions 190, 199, 202, and 205 each coordinate Zn(2+).

It belongs to the QueC family. Homodimer. Requires Zn(2+) as cofactor.

It carries out the reaction 7-carboxy-7-deazaguanine + NH4(+) + ATP = 7-cyano-7-deazaguanine + ADP + phosphate + H2O + H(+). Its pathway is purine metabolism; 7-cyano-7-deazaguanine biosynthesis. Its function is as follows. Catalyzes the ATP-dependent conversion of 7-carboxy-7-deazaguanine (CDG) to 7-cyano-7-deazaguanine (preQ(0)). This Clostridium novyi (strain NT) protein is 7-cyano-7-deazaguanine synthase.